A 141-amino-acid polypeptide reads, in one-letter code: Large ribosomal subunit protein uL11 (141 aa).

It belongs to the universal ribosomal protein uL11 family. Part of the ribosomal stalk of the 50S ribosomal subunit. Interacts with L10 and the large rRNA to form the base of the stalk. L10 forms an elongated spine to which L12 dimers bind in a sequential fashion forming a multimeric L10(L12)X complex. One or more lysine residues are methylated.

Functionally, forms part of the ribosomal stalk which helps the ribosome interact with GTP-bound translation factors. This is Large ribosomal subunit protein uL11 from Roseiflexus castenholzii (strain DSM 13941 / HLO8).